The chain runs to 168 residues: MTDQLEDQTQGGSTVDRSLPGGCMADSDLPTKGRQRGVRAVELNVAARLENLALLRTLVGAIGTFEDLDFDAVADLRLAVDEVCTRLIRSALPDATLRLVVDPRKDEVVVEASAACDTHDVVAPGSFSWHVLTALADDVQTFHDGRQPDVAGSVFGITLTARRAASSR.

The segment at 1–31 (MTDQLEDQTQGGSTVDRSLPGGCMADSDLPT) is disordered. Residues 7-16 (DQTQGGSTVD) show a composition bias toward polar residues. Residue 124–128 (PGSFS) coordinates ATP.

The protein belongs to the anti-sigma-factor family. As to quaternary structure, homodimer.

Functionally, a cognate anti-sigma factor for alternative sigma factor SigF. Alternative sigma factors are held in an inactive form by an anti-sigma factor. Binds ATP and GTP, may hydrolyze both. The sequence is that of Anti-sigma-F factor RsbW (rsbW) from Mycobacterium tuberculosis (strain CDC 1551 / Oshkosh).